The primary structure comprises 167 residues: Ribosome maturation factor RimM (167 aa).

Residues 92 to 166 (DDEFYHTDLI…RIVADPPEGL (75 aa)) enclose the PRC barrel domain.

The protein belongs to the RimM family. In terms of assembly, binds ribosomal protein uS19.

It localises to the cytoplasm. An accessory protein needed during the final step in the assembly of 30S ribosomal subunit, possibly for assembly of the head region. Essential for efficient processing of 16S rRNA. May be needed both before and after RbfA during the maturation of 16S rRNA. It has affinity for free ribosomal 30S subunits but not for 70S ribosomes. This is Ribosome maturation factor RimM from Ruegeria pomeroyi (strain ATCC 700808 / DSM 15171 / DSS-3) (Silicibacter pomeroyi).